The following is a 218-amino-acid chain: Pyridoxal 5'-phosphate synthase subunit PdxT (218 aa).

L-glutamine is bound at residue 54-56; that stretch reads GES. C86 serves as the catalytic Nucleophile. L-glutamine is bound by residues R120 and 149–150; that span reads IR. Catalysis depends on charge relay system residues H197 and E199.

Belongs to the glutaminase PdxT/SNO family. In the presence of PdxS, forms a dodecamer of heterodimers. Only shows activity in the heterodimer.

The enzyme catalyses aldehydo-D-ribose 5-phosphate + D-glyceraldehyde 3-phosphate + L-glutamine = pyridoxal 5'-phosphate + L-glutamate + phosphate + 3 H2O + H(+). It catalyses the reaction L-glutamine + H2O = L-glutamate + NH4(+). It participates in cofactor biosynthesis; pyridoxal 5'-phosphate biosynthesis. In terms of biological role, catalyzes the hydrolysis of glutamine to glutamate and ammonia as part of the biosynthesis of pyridoxal 5'-phosphate. The resulting ammonia molecule is channeled to the active site of PdxS. The chain is Pyridoxal 5'-phosphate synthase subunit PdxT from Saccharopolyspora erythraea (strain ATCC 11635 / DSM 40517 / JCM 4748 / NBRC 13426 / NCIMB 8594 / NRRL 2338).